Reading from the N-terminus, the 122-residue chain is Small ribosomal subunit protein uS12c (122 aa).

This sequence belongs to the universal ribosomal protein uS12 family. As to quaternary structure, part of the 30S ribosomal subunit.

It is found in the plastid. The protein localises to the chloroplast. Its function is as follows. With S4 and S5 plays an important role in translational accuracy. Located at the interface of the 30S and 50S subunits. The sequence is that of Small ribosomal subunit protein uS12c (rps12) from Mesostigma viride (Green alga).